Reading from the N-terminus, the 393-residue chain is MIQDPLVYLDISIDKKPIGRIVCKLFREKAPKTTENFYKLCAGDVKSPLKDQQYLSYKGNGFHRVVKNFMIQAGDIVFGTQKDSSSSSVGKGGCSIYADKEEVKTDDESFCYGNFEDENLGEFVEPFTLGMANLGSPNTNNSQFFITTYAAPHLNGKHSIFGQVVHGKSVVRTIENCRVDSDGVPESDVRISDCGVWEKTMGVPLYNASNDQIGGDVYEEYPDDDTHFGDDDFGKALEAANIIKESGTLLFKKKDYSNAFFKYRKSLNYINEYMPEPDVDKERNIQFINLKMKIYLNLSLVLFNLERYDDAIMYATYLLEMDNVPNRDQAKAYYRRGNSYLKKKRLDEALQDYIFCKEKNPDDEVIEQRIEYVNRLIEENKEKTRKNISKFFS.

The region spanning 8 to 196 (YLDISIDKKP…SDVRISDCGV (189 aa)) is the PPIase cyclophilin-type domain. 3 TPR repeats span residues 240–273 (ANII…INEY), 292–325 (MKIY…DNVP), and 330–363 (AKAY…NPDD).

In terms of assembly, interacts with RPD3 and CNS1.

The enzyme catalyses [protein]-peptidylproline (omega=180) = [protein]-peptidylproline (omega=0). PPIases accelerate the folding of proteins. It catalyzes the cis-trans isomerization of proline imidic peptide bonds in oligopeptides. Plays a major role in negative regulation of the heat shock transcription factor (HSF). This Saccharomyces cerevisiae (strain ATCC 204508 / S288c) (Baker's yeast) protein is Peptidyl-prolyl cis-trans isomerase CYP7 (CPR7).